The primary structure comprises 1048 residues: PH and SEC7 domain-containing protein 3 (1048 aa).

A compositionally biased stretch (basic and acidic residues) spans 36 to 45; the sequence is SEGKAPDTSD. Residues 36-57 are disordered; the sequence is SEGKAPDTSDHGGSTLLPPNVT. A Phosphoserine modification is found at Ser76. Disordered stretches follow at residues 104 to 126, 310 to 342, 364 to 383, and 395 to 434; these read LDSV…LKEQ, GGDK…KVPR, SWKA…SPVR, and QENK…PGYT. Basic and acidic residues predominate over residues 311 to 321; the sequence is GDKRETQHPID. The segment covering 397–423 has biased composition (basic and acidic residues); sequence NKQHLEKTPKPERDRERISEQEEHVKG. One can recognise an SEC7 domain in the interval 534–734; it reads TKGTPEIAFW…KALYNSIKNE (201 aa). The span at 741 to 758 shows a compositional bias: basic and acidic residues; the sequence is DDEEKKKSPSESTEEKAN. Residues 741 to 769 form a disordered region; it reads DDEEKKKSPSESTEEKANGTHPKTISRIG. Ser770 carries the post-translational modification Phosphoserine. A PH domain is found at 785–898; that stretch reads AVYKSGFLAR…WINKINCVAA (114 aa). Residues 922–952 are a coiled coil; the sequence is ATTTKLSQEEQLKSHESKLKQITTELAEHRS. The tract at residues 999–1048 is disordered; that stretch reads DESEAAGLKKSHSSPSLNPDTSPITAKVKRNVSERKDHRPETPSIKQKVT. Phosphoserine occurs at positions 1009, 1011, 1012, 1014, and 1020. Residues 1011 to 1022 are compositionally biased toward polar residues; that stretch reads SSPSLNPDTSPI. A compositionally biased stretch (basic and acidic residues) spans 1029-1039; that stretch reads NVSERKDHRPE.

Isoform 2 is expressed in epididymis (at protein level).

The protein resides in the cell membrane. It is found in the cell projection. It localises to the ruffle membrane. The protein localises to the postsynaptic density. Its function is as follows. Guanine nucleotide exchange factor for ARF6. The chain is PH and SEC7 domain-containing protein 3 (PSD3) from Homo sapiens (Human).